The chain runs to 822 residues: uncharacterized protein (822 aa).

A disordered region spans residues Met-1–Ala-230. Phosphoserine is present on Ser-27. Residues Ser-34–Asn-44 show a composition bias toward basic residues. Phosphoserine is present on residues Ser-47, Ser-51, and Ser-55. Position 57 is a phosphotyrosine (Tyr-57). Residues Pro-61–Val-70 are compositionally biased toward acidic residues. The span at Val-73–Lys-85 shows a compositional bias: basic residues. Residues Phe-92 to Ser-106 show a composition bias toward acidic residues. Phosphoserine is present on Ser-97. The segment covering Arg-111–Ser-121 has biased composition (basic residues). 2 stretches are compositionally biased toward acidic residues: residues Leu-129–Glu-144 and Ser-163–Glu-172. Residues Ser-137 and Ser-163 each carry the phosphoserine modification. ABC transporter domains lie at Leu-276 to Ala-519 and Ile-594 to Arg-809. ATP-binding positions include Ala-308 to Ser-315 and Gly-627 to Thr-634.

Belongs to the ABC transporter superfamily.

It is found in the cytoplasm. This is an uncharacterized protein from Schizosaccharomyces pombe (strain 972 / ATCC 24843) (Fission yeast).